The primary structure comprises 361 residues: KDEL-tailed cysteine endopeptidase CEP2 (361 aa).

Positions 1 to 20 (MKKLLLIFLFSLVILQTACG) are cleaved as a signal peptide. The propeptide at 21–127 (FDYDDKEIES…FMYDHENLSK (107 aa)) is activation peptide. Asparagine 75 and asparagine 124 each carry an N-linked (GlcNAc...) asparagine glycan. 3 disulfide bridges follow: cysteine 149/cysteine 191, cysteine 183/cysteine 224, and cysteine 282/cysteine 333. Residue cysteine 152 is part of the active site. Catalysis depends on residues histidine 288 and asparagine 308. Positions 358-361 (KDEL) match the Prevents secretion from ER motif.

The protein belongs to the peptidase C1 family. As to expression, expressed in roots, stems, rosette and cauline leaves, flowers, buds and green siliques. Found in the tip of young primary leaves, in very young root tips and at later stages in all tissues of lateral root, including the vascular bundle. Not expressed in lateral root primordia, while directly emerging through the epidermis.

Its subcellular location is the endoplasmic reticulum. In terms of biological role, involved in the final stage of developmental programmed cell death and in intercalation of new cells. Cleaves extensins, thus probably supporting the final cell collapse. This chain is KDEL-tailed cysteine endopeptidase CEP2, found in Arabidopsis thaliana (Mouse-ear cress).